We begin with the raw amino-acid sequence, 378 residues long: Palmitoyltransferase PFA4 (378 aa).

Residues 1–9 (MPVKLRWPW) lie on the Cytoplasmic side of the membrane. Residues 10 to 30 (LGIAIPTFLISFIGYGAHYFI) traverse the membrane as a helical segment. At 31–40 (LSNFLSVPKQ) the chain is on the lumenal side. Residues 41-61 (ITFEFCLSMIWLSYYLAICTN) traverse the membrane as a helical segment. Residues 62-119 (PGRPLPNYKPPPDIWRNFCKKCQSYKPERSHHCKTCNQCVLMMDHHCPWTMNCVGFAN) are Cytoplasmic-facing. One can recognise a DHHC domain in the interval 78 to 128 (NFCKKCQSYKPERSHHCKTCNQCVLMMDHHCPWTMNCVGFANYPHFLRFLF). Cys108 serves as the catalytic S-palmitoyl cysteine intermediate. A helical transmembrane segment spans residues 120 to 140 (YPHFLRFLFWIIVTTSVLFCI). The Lumenal segment spans residues 141–164 (QAKRIYFIWQQRHLPGYFFKKSEL). A helical membrane pass occupies residues 165-185 (IFLTISSPLNSFVLLTITILF). Residues 186–378 (LRCLFNQILN…DDFGVDVDME (193 aa)) lie on the Cytoplasmic side of the membrane.

Belongs to the DHHC palmitoyltransferase family. PFA4 subfamily. Autopalmitoylated.

Its subcellular location is the endoplasmic reticulum membrane. It carries out the reaction L-cysteinyl-[protein] + hexadecanoyl-CoA = S-hexadecanoyl-L-cysteinyl-[protein] + CoA. Mediates the reversible addition of palmitate to target proteins, thereby regulating their membrane association and biological function. Palmitoylates several amino acid permeases. Palmitoylates chitin synthase CHS3, which is required for its proper export from the ER. Can palmitoylate RAS2 in vitro. This is Palmitoyltransferase PFA4 from Saccharomyces cerevisiae (strain ATCC 204508 / S288c) (Baker's yeast).